A 339-amino-acid chain; its full sequence is UDP-N-acetylenolpyruvoylglucosamine reductase (339 aa).

Residues Gly-18–Arg-189 form the FAD-binding PCMH-type domain. Arg-166 is a catalytic residue. Catalysis depends on Ser-239, which acts as the Proton donor. The active site involves Glu-335.

This sequence belongs to the MurB family. It depends on FAD as a cofactor.

The protein resides in the cytoplasm. The catalysed reaction is UDP-N-acetyl-alpha-D-muramate + NADP(+) = UDP-N-acetyl-3-O-(1-carboxyvinyl)-alpha-D-glucosamine + NADPH + H(+). Its pathway is cell wall biogenesis; peptidoglycan biosynthesis. Its function is as follows. Cell wall formation. The chain is UDP-N-acetylenolpyruvoylglucosamine reductase from Pseudomonas aeruginosa (strain ATCC 15692 / DSM 22644 / CIP 104116 / JCM 14847 / LMG 12228 / 1C / PRS 101 / PAO1).